Here is a 310-residue protein sequence, read N- to C-terminus: L-lactate dehydrogenase (310 aa).

NAD(+)-binding positions include Val-17, Asp-38, Lys-43, Tyr-69, and 83 to 84 (GA). The substrate site is built by Gln-86 and Arg-92. NAD(+) is bound by residues Ser-105, 122–124 (ATN), and Ser-147. 124 to 127 (NPVD) is a substrate binding site. Substrate is bound at residue 152-155 (DTAR). Arg-157 and His-172 together coordinate beta-D-fructose 1,6-bisphosphate. His-179 serves as the catalytic Proton acceptor. Tyr-218 bears the Phosphotyrosine mark. Thr-227 serves as a coordination point for substrate.

This sequence belongs to the LDH/MDH superfamily. LDH family. Homotetramer.

It is found in the cytoplasm. The catalysed reaction is (S)-lactate + NAD(+) = pyruvate + NADH + H(+). The protein operates within fermentation; pyruvate fermentation to lactate; (S)-lactate from pyruvate: step 1/1. With respect to regulation, allosterically activated by fructose 1,6-bisphosphate (FBP). In terms of biological role, catalyzes the conversion of lactate to pyruvate. The chain is L-lactate dehydrogenase from Halalkalibacterium halodurans (strain ATCC BAA-125 / DSM 18197 / FERM 7344 / JCM 9153 / C-125) (Bacillus halodurans).